The chain runs to 545 residues: MFKPQHMYDREFGTGNGYSNGNGYTNGNGHTNGNGNYNGNGHVNGNGKANGAKVVKMKPMDSELLREQGHIMVDFIADYYKNLQDSPQDFPVLSQVQPGYLRDMLPDSAPERPESLKELLDDVSKKIMPGITHWQSPSYFAYYASSTSVAGFLGEMLNAGLSVVGFTWLTSPAATELEIIVLDWLAKLLQLPDHFLSTGNGGGVIQGTGCEAVLVVVLAARDRILKKVGKTLLPQLVVYGSDQTHSSFRKACLIGGIHEENIRLLKTDSSTNYGMPPESLEEAISHDLAKGFIPFFICATVGTTSSAAVDPLVPLGNIAKKYGIWLHVDAAYAGNACICPEYRKFIDGIENADSFNMNAHKWLFANQTCSPLWVKDRYSLIDALKTNPEYLEFKVSKKDTVVNYKDWQISLSRRFRSLKLWMVLRLYGSENLRNFIRDHVNLAKHFEDYVAQDPSFEVVTTRYFSLVCFRLAPVDGDEDQCNERNRELLAAVNSTGKIFISHTALSGKFVLRFAVGAPLTEEKHVTEAWQIIQKHASKFTRNDHY.

The segment covering 23–44 has biased composition (gly residues); sequence GYTNGNGHTNGNGNYNGNGHVN. The disordered stretch occupies residues 23-45; the sequence is GYTNGNGHTNGNGNYNGNGHVNG. His245 and His360 together coordinate L-tyrosine. The residue at position 361 (Lys361) is an N6-(pyridoxal phosphate)lysine. Residue Tyr390 coordinates L-tyrosine.

Belongs to the group II decarboxylase family. As to quaternary structure, homotetramer. Requires pyridoxal 5'-phosphate as cofactor. Expressed specifically in flowers.

The protein resides in the cytoplasm. The enzyme catalyses L-tyrosine + H(+) = tyramine + CO2. Functionally, converts tyrosine into tyramine, a precursor of isoquinoline alkaloids and various amides. This Arabidopsis thaliana (Mouse-ear cress) protein is Tyrosine decarboxylase 2.